A 471-amino-acid chain; its full sequence is ATP synthase subunit beta (471 aa).

ATP is bound at residue 152 to 159 (GGAGVGKT).

The protein belongs to the ATPase alpha/beta chains family. F-type ATPases have 2 components, CF(1) - the catalytic core - and CF(0) - the membrane proton channel. CF(1) has five subunits: alpha(3), beta(3), gamma(1), delta(1), epsilon(1). CF(0) has three main subunits: a(1), b(2) and c(9-12). The alpha and beta chains form an alternating ring which encloses part of the gamma chain. CF(1) is attached to CF(0) by a central stalk formed by the gamma and epsilon chains, while a peripheral stalk is formed by the delta and b chains.

It is found in the cell membrane. It carries out the reaction ATP + H2O + 4 H(+)(in) = ADP + phosphate + 5 H(+)(out). Produces ATP from ADP in the presence of a proton gradient across the membrane. The catalytic sites are hosted primarily by the beta subunits. In Herpetosiphon aurantiacus (strain ATCC 23779 / DSM 785 / 114-95), this protein is ATP synthase subunit beta.